Here is a 314-residue protein sequence, read N- to C-terminus: FHA domain-containing protein DDL (314 aa).

Over residues 1–10 (MAPSSRSPSP) the composition is skewed to low complexity. The disordered stretch occupies residues 1–146 (MAPSSRSPSP…NVEEDSVARM (146 aa)). Positions 18–127 (ARGEKEIGRS…AIASRHDEGS (110 aa)) are enriched in basic and acidic residues. Position 133 is a phosphoserine (serine 133). The 64-residue stretch at 219–282 (YLFGRERRIA…NKTYINESPI (64 aa)) folds into the FHA domain.

As to quaternary structure, interacts with DCL1 (via N-terminus). Expressed in roots, lateral roots, vascular strands of roots and leaves, vegetative meristems, pollen and developing seeds.

It is found in the nucleus. Involved in the microRNA (miRNA) and short interfering RNA (siRNA) biogenesis. May facilitate DCL1 to access or recognize primary miRNAs. Binds RNA non-specifically. The sequence is that of FHA domain-containing protein DDL (DDL) from Arabidopsis thaliana (Mouse-ear cress).